The sequence spans 145 residues: MPARTKARKRALDVLFEADLRAADPLEILADHTARADTPVPEYAVRLVEGVAAHRAEIDRIIEQFAVGWTLQRMPTVDRNILRLAIYELLWVTEVPDAVVLAEAVKLAQDLSTAESAPFVNGVLAAVRANQATVTASPPPGEPPD.

It belongs to the NusB family.

Involved in transcription antitermination. Required for transcription of ribosomal RNA (rRNA) genes. Binds specifically to the boxA antiterminator sequence of the ribosomal RNA (rrn) operons. The protein is Transcription antitermination protein NusB of Acidothermus cellulolyticus (strain ATCC 43068 / DSM 8971 / 11B).